Here is a 716-residue protein sequence, read N- to C-terminus: Lamin-like protein (716 aa).

Composition is skewed to basic residues over residues 1–10 (MDMSKKKSKR) and 35–45 (KKTKTTTKKKA). The tract at residues 1–107 (MDMSKKKSKR…TIQSIPTTPI (107 aa)) is disordered. A compositionally biased stretch (low complexity) spans 62–107 (ITTTTTSTSTTNNNNITTTSTSSQQSNGTLSSSSSPTIQSIPTTPI). A coiled-coil region spans residues 130–450 (LREKDELSLI…KMRKQMADLK (321 aa)). Residues 132 to 515 (EKDELSLIHN…ELVKGFEKTV (384 aa)) enclose the IF rod domain. Residues 519–522 (KRKR) carry the Nuclear localization signal motif. Positions 519–584 (KRKRSKLQHE…PTGPEQSELF (66 aa)) are disordered. Positions 532–545 (AANQDQNGMTIEEQ) are enriched in polar residues. The segment covering 546–564 (SSTSTTTTTSATGSSSSTS) has biased composition (low complexity). Positions 565 to 584 (HLDNIDSSKLPTGPEQSELF) are enriched in polar residues. One can recognise an LTD domain in the interval 575-698 (PTGPEQSELF…EETTTVTLPA (124 aa)). The CAAX motif signature appears at 713 to 716 (CLIM).

Belongs to the intermediate filament family. As to quaternary structure, homodimer. Lamin dimers then assemble into dimeric head-to-tail polymers. Ultimately, two head-to-tail polymers assemble laterally into a protofilament with a uniformly shaped rod of 3.5 nm in diameter.

It is found in the nucleus lamina. Its subcellular location is the nucleus envelope. The protein resides in the nucleus inner membrane. Lamins are intermediate filament proteins that assemble into a filamentous meshwork, and which constitute the major components of the nuclear lamina, a fibrous layer on the nucleoplasmic side of the inner nuclear membrane. Lamins provide a framework for the nuclear envelope, bridging the nuclear envelope and chromatin, thereby playing an important role in nuclear assembly, chromatin organization, nuclear membrane and telomere dynamics. The structural integrity of the lamina is strictly controlled by the cell cycle, as seen by the disintegration and formation of the nuclear envelope in prophase and telophase, respectively. Helps to maintain integrity of nuclear structures in response to mechanical stress. This is Lamin-like protein from Dictyostelium discoideum (Social amoeba).